Reading from the N-terminus, the 554-residue chain is Dihydroxy-acid dehydratase (554 aa).

Aspartate 78 serves as a coordination point for Mg(2+). A [2Fe-2S] cluster-binding site is contributed by cysteine 119. Residues aspartate 120 and lysine 121 each contribute to the Mg(2+) site. Lysine 121 carries the N6-carboxylysine modification. [2Fe-2S] cluster is bound at residue cysteine 191. Glutamate 442 lines the Mg(2+) pocket. Serine 468 functions as the Proton acceptor in the catalytic mechanism.

Belongs to the IlvD/Edd family. In terms of assembly, homodimer. It depends on [2Fe-2S] cluster as a cofactor. Mg(2+) is required as a cofactor.

The enzyme catalyses (2R)-2,3-dihydroxy-3-methylbutanoate = 3-methyl-2-oxobutanoate + H2O. It carries out the reaction (2R,3R)-2,3-dihydroxy-3-methylpentanoate = (S)-3-methyl-2-oxopentanoate + H2O. Its pathway is amino-acid biosynthesis; L-isoleucine biosynthesis; L-isoleucine from 2-oxobutanoate: step 3/4. The protein operates within amino-acid biosynthesis; L-valine biosynthesis; L-valine from pyruvate: step 3/4. Functionally, functions in the biosynthesis of branched-chain amino acids. Catalyzes the dehydration of (2R,3R)-2,3-dihydroxy-3-methylpentanoate (2,3-dihydroxy-3-methylvalerate) into 2-oxo-3-methylpentanoate (2-oxo-3-methylvalerate) and of (2R)-2,3-dihydroxy-3-methylbutanoate (2,3-dihydroxyisovalerate) into 2-oxo-3-methylbutanoate (2-oxoisovalerate), the penultimate precursor to L-isoleucine and L-valine, respectively. This Thermotoga sp. (strain RQ2) protein is Dihydroxy-acid dehydratase.